The primary structure comprises 337 residues: Glyceraldehyde-3-phosphate dehydrogenase (337 aa).

NAD(+) contacts are provided by residues 12-13, D34, and R79; that span reads RI. Residues 150–152, T181, 210–211, and R233 contribute to the D-glyceraldehyde 3-phosphate site; these read SCT and TG. The active-site Nucleophile is the C151. N315 is an NAD(+) binding site.

This sequence belongs to the glyceraldehyde-3-phosphate dehydrogenase family. Homotetramer.

The protein localises to the cytoplasm. It catalyses the reaction D-glyceraldehyde 3-phosphate + phosphate + NAD(+) = (2R)-3-phospho-glyceroyl phosphate + NADH + H(+). It functions in the pathway carbohydrate degradation; glycolysis; pyruvate from D-glyceraldehyde 3-phosphate: step 1/5. In Ajellomyces capsulatus (Darling's disease fungus), this protein is Glyceraldehyde-3-phosphate dehydrogenase (GPD).